A 694-amino-acid polypeptide reads, in one-letter code: Cyclic nucleotide-gated channel beta-3 (694 aa).

Topologically, residues methionine 1 to tyrosine 210 are cytoplasmic. 2 disordered regions span residues cysteine 24–cysteine 82 and glutamate 146–glutamine 177. 2 stretches are compositionally biased toward polar residues: residues asparagine 26–asparagine 40 and alanine 153–glutamate 168. Residues leucine 211–phenylalanine 234 form a helical membrane-spanning segment. Over proline 235 to asparagine 241 the chain is Extracellular. A helical transmembrane segment spans residues lysine 242–leucine 262. The Cytoplasmic segment spans residues isoleucine 263–lysine 291. Residues phenylalanine 292–phenylalanine 309 traverse the membrane as a helical segment. Over glycine 310–asparagine 312 the chain is Extracellular. The helical transmembrane segment at proline 313–phenylalanine 327 threads the bilayer. At glutamate 328 to alanine 340 the chain is on the cytoplasmic side. The ion conduction pathway stretch occupies residues alanine 340 to alanine 439. Residues tyrosine 341–tyrosine 363 traverse the membrane as a helical segment. Over tyrosine 364–lysine 385 the chain is Extracellular. 2 consecutive transmembrane segments (helical) span residues tyrosine 386–isoleucine 412 and valine 413–isoleucine 437. The interval threonine 399–glycine 402 is selectivity filter. The Cytoplasmic portion of the chain corresponds to glycine 438–lysine 694. The segment at alanine 442–lysine 518 is C-linker. The tract at residues threonine 522–leucine 638 is cyclic nucleotide-binding domain. Glycine 583, glutamate 584, arginine 596, and threonine 597 together coordinate 3',5'-cyclic GMP.

This sequence belongs to the cyclic nucleotide-gated cation channel (TC 1.A.1.5) family. CNGB3 subfamily. Forms heterotetrameric channels composed of CNGA3 and CNGB3 subunits with 3:1 stoichiometry. Small subset of retinal photoreceptor cells and testis.

It localises to the cell membrane. The catalysed reaction is Ca(2+)(in) = Ca(2+)(out). The enzyme catalyses Na(+)(in) = Na(+)(out). It carries out the reaction K(+)(in) = K(+)(out). It catalyses the reaction NH4(+)(in) = NH4(+)(out). The catalysed reaction is Rb(+)(in) = Rb(+)(out). The enzyme catalyses Li(+)(in) = Li(+)(out). It carries out the reaction Cs(+)(in) = Cs(+)(out). Pore-forming subunit of the cone cyclic nucleotide-gated channel. Mediates cone photoresponses at bright light converting transient changes in intracellular cGMP levels into electrical signals. In the dark, cGMP levels are high and keep the channel open enabling a steady inward current carried by Na(+) and Ca(2+) ions that leads to membrane depolarization and neurotransmitter release from synaptic terminals. Upon photon absorption cGMP levels decline leading to channel closure and membrane hyperpolarization that ultimately slows neurotransmitter release and signals the presence of light, the end point of the phototransduction cascade. Conducts cGMP- and cAMP-gated ion currents, with permeability for monovalent and divalent cations. The polypeptide is Cyclic nucleotide-gated channel beta-3 (Mus musculus (Mouse)).